The chain runs to 398 residues: MAANNYTKKAVHFGAGNIGRGFVACFLHNSGYEVIFADVNADLINALNASPSYKVIEVGSEGTEESTITNYRAINSRTNEEELIQEIATAEVVTCSVGPNILKFIAPVIAKGIDRRSEDLPPVAVIACENAIGATDTLAEYIKDPKNTPSHRLENYEKRARFANSAIDRIVPAQDADAGLDVKLEKFYEWVVDRTPFKDMSPPDIKGINWVDNLLPYIERKLYTVNTGHATAAYHGYIRRKSTVYDALQDKDIQEEVKKALENTSHLITQKHGIDEQAQHEYVEKIVRRISNPHLEDAVERVGRAPLRKLSRKERFIGPAAELAEHGKDCSALLDAAEMAFRFQNVEGDEESAELAKIMASNKPEDVVKQVCGLNEQEKLFPKVVEVVQRVQADLHDD.

10–21 (AVHFGAGNIGRG) contributes to the NAD(+) binding site. Lysine 221 is an active-site residue.

It belongs to the mannitol dehydrogenase family. In terms of assembly, monomer.

It carries out the reaction D-mannitol 1-phosphate + NAD(+) = beta-D-fructose 6-phosphate + NADH + H(+). Functionally, catalyzes the NAD(H)-dependent interconversion of D-fructose 6-phosphate and D-mannitol 1-phosphate in the mannitol metabolic pathway. This is Mannitol-1-phosphate 5-dehydrogenase from Neurospora crassa (strain ATCC 24698 / 74-OR23-1A / CBS 708.71 / DSM 1257 / FGSC 987).